The primary structure comprises 153 residues: Movement protein TGB3 (153 aa).

Residues 1-50 (MEAPAITHSSGCVCSDCQWSGSPTVDTKVYLGSGTHANTTKTRETSFLSV) lie on the Cytoplasmic side of the membrane. The chain crosses the membrane as a helical span at residues 51–71 (LNDNAWLFVIAALILCLYFII). Topologically, residues 72–127 (SKPHVDAVYTEFHQDLNGFSMKLAPGVPIDPKVIAAVKNWQKYPFGTDPRENMVTS) are lumenal. The chain crosses the membrane as a helical span at residues 128-148 (IVSGLRHSFCILLLVVVLLVY). At 149-153 (VCHKP) the chain is on the cytoplasmic side.

This sequence belongs to the virgaviridae TGB3 movement protein family. Interacts with movement proteins TGB1 and TGB2. TGB1-TGB3-TGB2 complex formation is enhanced by ATP hydrolysis.

It localises to the host cell junction. It is found in the host plasmodesma. The protein resides in the host endoplasmic reticulum membrane. The protein localises to the host cytoplasm. Its subcellular location is the host cytoskeleton. Functionally, participates in the transport of viral genome to neighboring plant cells directly through plasmodesmata, without any budding. TGBp2 and TGBp3 are necessary for intracellular delivery of TGBp1-containing vRNPs to plasmodesmata. Can gate plasmodesmata and increase their size exclusion limit. Induces host actin cytoskeleton network thickening, which probably plays a major role in virus cell-to-cell movement. The chain is Movement protein TGB3 from Arachis hypogaea (Peanut).